Here is a 153-residue protein sequence, read N- to C-terminus: Small ribosomal subunit protein eS19 (153 aa).

The protein belongs to the eukaryotic ribosomal protein eS19 family. In terms of assembly, part of the 30S ribosomal subunit.

Its function is as follows. May be involved in maturation of the 30S ribosomal subunit. This is Small ribosomal subunit protein eS19 from Aeropyrum pernix (strain ATCC 700893 / DSM 11879 / JCM 9820 / NBRC 100138 / K1).